The sequence spans 513 residues: ATP synthase subunit alpha (513 aa).

Residue 169 to 176 coordinates ATP; sequence GDRQTGKT.

This sequence belongs to the ATPase alpha/beta chains family. In terms of assembly, F-type ATPases have 2 components, CF(1) - the catalytic core - and CF(0) - the membrane proton channel. CF(1) has five subunits: alpha(3), beta(3), gamma(1), delta(1), epsilon(1). CF(0) has three main subunits: a(1), b(2) and c(9-12). The alpha and beta chains form an alternating ring which encloses part of the gamma chain. CF(1) is attached to CF(0) by a central stalk formed by the gamma and epsilon chains, while a peripheral stalk is formed by the delta and b chains.

The protein localises to the cell inner membrane. The enzyme catalyses ATP + H2O + 4 H(+)(in) = ADP + phosphate + 5 H(+)(out). Produces ATP from ADP in the presence of a proton gradient across the membrane. The alpha chain is a regulatory subunit. This chain is ATP synthase subunit alpha, found in Thioalkalivibrio sulfidiphilus (strain HL-EbGR7).